The following is a 346-amino-acid chain: Biotin synthase (346 aa).

Positions 38-256 constitute a Radical SAM core domain; that stretch reads RQVQVSTLLS…IAVARIMMPT (219 aa). Cys53, Cys57, and Cys60 together coordinate [4Fe-4S] cluster. 4 residues coordinate [2Fe-2S] cluster: Cys97, Cys128, Cys188, and Arg260.

Belongs to the radical SAM superfamily. Biotin synthase family. As to quaternary structure, homodimer. It depends on [4Fe-4S] cluster as a cofactor. Requires [2Fe-2S] cluster as cofactor.

It catalyses the reaction (4R,5S)-dethiobiotin + (sulfur carrier)-SH + 2 reduced [2Fe-2S]-[ferredoxin] + 2 S-adenosyl-L-methionine = (sulfur carrier)-H + biotin + 2 5'-deoxyadenosine + 2 L-methionine + 2 oxidized [2Fe-2S]-[ferredoxin]. It participates in cofactor biosynthesis; biotin biosynthesis; biotin from 7,8-diaminononanoate: step 2/2. Its function is as follows. Catalyzes the conversion of dethiobiotin (DTB) to biotin by the insertion of a sulfur atom into dethiobiotin via a radical-based mechanism. This chain is Biotin synthase, found in Shigella dysenteriae serotype 1 (strain Sd197).